The chain runs to 156 residues: uncharacterized protein (156 aa).

A coiled-coil region spans residues 43-84; the sequence is LKIDENEVKLEISVEKLKNLSRVCENIEQVVDKVVEELRYAL.

This is an uncharacterized protein from Aquifex aeolicus (strain VF5).